The sequence spans 398 residues: Carbamoyl phosphate synthase large chain (398 aa).

The region spanning 1–187 is the ATP-grasp domain; that stretch reads KLGVPQPEGG…LAKIAAKVIV (187 aa). Residues 1–255 form a carbamoyl phosphate synthetic domain region; sequence KLGVPQPEGG…YKAELAADNV (255 aa). ATP-binding residues include Arg-32, Asp-71, Leu-73, Glu-78, Gly-103, Val-104, His-105, Ser-106, Gln-146, and Glu-158. Mg(2+)-binding residues include Gln-146, Glu-158, and Asn-160. Gln-146, Glu-158, and Asn-160 together coordinate Mn(2+). In terms of domain architecture, MGS-like spans 254–395; it reads NVLPLTGKVF…NEYHKEMEEE (142 aa). Positions 256 to 398 are allosteric domain; that stretch reads LPLTGKVFLS…HKEMEEENKV (143 aa).

Belongs to the CarB family. Composed of two chains; the small (or glutamine) chain promotes the hydrolysis of glutamine to ammonia, which is used by the large (or ammonia) chain to synthesize carbamoyl phosphate. Tetramer of heterodimers (alpha,beta)4. Mg(2+) serves as cofactor. Mn(2+) is required as a cofactor.

The catalysed reaction is hydrogencarbonate + L-glutamine + 2 ATP + H2O = carbamoyl phosphate + L-glutamate + 2 ADP + phosphate + 2 H(+). It carries out the reaction hydrogencarbonate + NH4(+) + 2 ATP = carbamoyl phosphate + 2 ADP + phosphate + 2 H(+). Its pathway is amino-acid biosynthesis; L-arginine biosynthesis; carbamoyl phosphate from bicarbonate: step 1/1. The protein operates within pyrimidine metabolism; UMP biosynthesis via de novo pathway; (S)-dihydroorotate from bicarbonate: step 1/3. Its function is as follows. Large subunit of the glutamine-dependent carbamoyl phosphate synthetase (CPSase). CPSase catalyzes the formation of carbamoyl phosphate from the ammonia moiety of glutamine, carbonate, and phosphate donated by ATP, constituting the first step of 2 biosynthetic pathways, one leading to arginine and/or urea and the other to pyrimidine nucleotides. The large subunit (synthetase) binds the substrates ammonia (free or transferred from glutamine from the small subunit), hydrogencarbonate and ATP and carries out an ATP-coupled ligase reaction, activating hydrogencarbonate by forming carboxy phosphate which reacts with ammonia to form carbamoyl phosphate. This is Carbamoyl phosphate synthase large chain from Methanosarcina barkeri.